The chain runs to 922 residues: 1,4-alpha-glucan-branching enzyme 1, chloroplastic/amyloplastic (922 aa).

A chloroplast-targeting transit peptide spans 1–47 (MVYTISGIRFPVLPSLHKSTLRCDRRASSHSFFLKNNSSSFSRTSLY). The segment at 83 to 130 (LENPDITSEDAQNLEDLTMKDGNKYNIDESTSSYREVGDEKGSVTSSS) is disordered. Positions 99-109 (LTMKDGNKYNI) are enriched in basic and acidic residues. D494 serves as the catalytic Nucleophile. The Proton donor role is filled by E549. A disordered region spans residues 870–922 (VESEPIELSVEEAESEPIERSVEEVESETTQQSVEVESETTQQSVEVESETTQ). The span at 897-922 (ETTQQSVEVESETTQQSVEVESETTQ) shows a compositional bias: low complexity.

It belongs to the glycosyl hydrolase 13 family. GlgB subfamily. Monomer. Expressed in roots, leaves, stipules, pods and flowers.

Its subcellular location is the plastid. It localises to the chloroplast. It is found in the amyloplast. It catalyses the reaction Transfers a segment of a (1-&gt;4)-alpha-D-glucan chain to a primary hydroxy group in a similar glucan chain.. It functions in the pathway glycan biosynthesis; starch biosynthesis. Its function is as follows. Catalyzes the formation of the alpha-1,6-glucosidic linkages in starch by scission of a 1,4-alpha-linked oligosaccharide from growing alpha-1,4-glucan chains and the subsequent attachment of the oligosaccharide to the alpha-1,6 position. May preferentially transfer short chains during branching. Responsible for the synthesis of about 75% of the amylopectin found in the starch granules of mature embryos. This is 1,4-alpha-glucan-branching enzyme 1, chloroplastic/amyloplastic (SBEI) from Pisum sativum (Garden pea).